A 423-amino-acid chain; its full sequence is D-threonate kinase (423 aa).

Residues Asp9, Arg51, and 81-84 (KIDS) contribute to the substrate site. ATP-binding positions include Ser245, 355-358 (GGDI), and Gly401.

It belongs to the four-carbon acid sugar kinase family.

The catalysed reaction is D-threonate + ATP = 4-O-phospho-D-threonate + ADP + H(+). Its function is as follows. Catalyzes the ATP-dependent phosphorylation of D-threonate to D-threonate 4-phosphate. Can also phosphorylate 4-hydroxy-L-threonine, with lower efficiency. This side reaction may serve to deal with the toxicity of 4-hydroxy-L-threonine by converting it into 4-hydroxy-L-threonine 4-phosphate, a useful product that can be used by PdxA2. This chain is D-threonate kinase, found in Salmonella typhimurium (strain LT2 / SGSC1412 / ATCC 700720).